Reading from the N-terminus, the 60-residue chain is Cytotoxin 7 (60 aa).

Cystine bridges form between C3-C21, C14-C38, C42-C53, and C54-C59.

It belongs to the three-finger toxin family. Short-chain subfamily. Type IA cytotoxin sub-subfamily. As to quaternary structure, monomer in solution; Homodimer and oligomer in the presence of negatively charged lipids forming a pore with a size ranging between 20 and 30 Angstroms. Expressed by the venom gland.

Its subcellular location is the secreted. It localises to the target cell membrane. Shows cytolytic activity on many different cells by forming pore in lipid membranes. In vivo, increases heart rate or kills the animal by cardiac arrest. In addition, it binds to heparin with high affinity, interacts with Kv channel-interacting protein 1 (KCNIP1) in a calcium-independent manner, and binds to integrin alpha-V/beta-3 (ITGAV/ITGB3) with moderate affinity. Preferentially binds acidic phospholipids like phosphatidylserine, phosphatidic acid and phosphatidyl glycerol. Has hemolytic activity towards human erythrocytes (EC(50)=0.171 uM) and cytolytic activity towards various cell lines. This Naja naja (Indian cobra) protein is Cytotoxin 7.